A 226-amino-acid polypeptide reads, in one-letter code: Adenylate kinase (226 aa).

Residue 11 to 16 (GSGKGT) coordinates ATP. Residues 31–64 (SAGEILKHALSVTKFHFNFNTDNMLNQINSGNLV) are NMP. AMP contacts are provided by residues 62 to 64 (NLV), 90 to 93 (GFPR), and Gln-97. Positions 127–164 (GRQVHIKSGRTYHIKFNPPKLDGIDDITGEKLVIRADD) are LID. ATP is bound by residues Arg-128 and 137 to 138 (TY). 2 residues coordinate AMP: Arg-161 and Arg-172. An ATP-binding site is contributed by Gln-205.

Belongs to the adenylate kinase family. In terms of assembly, monomer.

It is found in the cytoplasm. It catalyses the reaction AMP + ATP = 2 ADP. It functions in the pathway purine metabolism; AMP biosynthesis via salvage pathway; AMP from ADP: step 1/1. Its function is as follows. Catalyzes the reversible transfer of the terminal phosphate group between ATP and AMP. Plays an important role in cellular energy homeostasis and in adenine nucleotide metabolism. The protein is Adenylate kinase of Blochmanniella floridana.